A 535-amino-acid chain; its full sequence is uncharacterized protein (535 aa).

6 consecutive transmembrane segments (helical) span residues 63 to 83 (LTGI…PSIY), 90 to 110 (VTFG…TYWI), 143 to 163 (VAAV…TLYG), 168 to 188 (VFVT…ATNC), 226 to 246 (SLGS…VLLV), and 258 to 278 (VLIL…ILAW). The region spanning 279–330 (LTAAPVRVVRAALKRVEQGDLRGDLVVFDGTELGELQRGFNAMVNGLRERER) is the HAMP domain. The region spanning 362 to 486 (AVVFVDIVGS…KPVNQAARLC (125 aa)) is the Guanylate cyclase domain.

The protein belongs to the adenylyl cyclase class-3 family.

It is found in the cell membrane. This is an uncharacterized protein from Mycobacterium tuberculosis (strain ATCC 25618 / H37Rv).